The chain runs to 357 residues: Peptide chain release factor 1 (357 aa).

Gln-236 carries the post-translational modification N5-methylglutamine.

The protein belongs to the prokaryotic/mitochondrial release factor family. In terms of processing, methylated by PrmC. Methylation increases the termination efficiency of RF1.

It is found in the cytoplasm. Peptide chain release factor 1 directs the termination of translation in response to the peptide chain termination codons UAG and UAA. The chain is Peptide chain release factor 1 from Mycolicibacterium vanbaalenii (strain DSM 7251 / JCM 13017 / BCRC 16820 / KCTC 9966 / NRRL B-24157 / PYR-1) (Mycobacterium vanbaalenii).